Here is a 364-residue protein sequence, read N- to C-terminus: Alanine racemase (364 aa).

The active-site Proton acceptor; specific for D-alanine is the Lys35. Lys35 bears the N6-(pyridoxal phosphate)lysine mark. A substrate-binding site is contributed by Arg132. Residue Tyr260 is the Proton acceptor; specific for L-alanine of the active site. Residue Met308 participates in substrate binding.

It belongs to the alanine racemase family. It depends on pyridoxal 5'-phosphate as a cofactor.

The enzyme catalyses L-alanine = D-alanine. It functions in the pathway amino-acid biosynthesis; D-alanine biosynthesis; D-alanine from L-alanine: step 1/1. Functionally, catalyzes the interconversion of L-alanine and D-alanine. May also act on other amino acids. This Acidithiobacillus ferrooxidans (strain ATCC 23270 / DSM 14882 / CIP 104768 / NCIMB 8455) (Ferrobacillus ferrooxidans (strain ATCC 23270)) protein is Alanine racemase (alr).